Reading from the N-terminus, the 160-residue chain is E3 ubiquitin ligase complex SCF subunit sconC (160 aa).

Positions 101–160 (ILAANYLDIKALLDVGCKTVANMIKGKSPEEIRKTFNIQNDFTPEEEDQIRRENEWAEDR) are interaction with the F-box domain of F-box proteins.

This sequence belongs to the SKP1 family. In terms of assembly, component of the SCF (SKP1-CUL1-F-box protein) E3 ubiquitin ligase complexes.

It participates in protein modification; protein ubiquitination. Its function is as follows. Essential component of the SCF (SKP1-CUL1-F-box protein) E3 ubiquitin ligase complexes, which mediate the ubiquitination and subsequent proteasomal degradation of target proteins. Controls sulfur metabolite repression, probably by mediating the inactivation or degradation of the metR transcription factor. This chain is E3 ubiquitin ligase complex SCF subunit sconC (sconC), found in Talaromyces stipitatus (strain ATCC 10500 / CBS 375.48 / QM 6759 / NRRL 1006) (Penicillium stipitatum).